A 327-amino-acid polypeptide reads, in one-letter code: Tetraacyldisaccharide 4'-kinase (327 aa).

ATP is bound at residue 52-59; that stretch reads TLGGAGKT.

It belongs to the LpxK family.

The enzyme catalyses a lipid A disaccharide + ATP = a lipid IVA + ADP + H(+). The protein operates within glycolipid biosynthesis; lipid IV(A) biosynthesis; lipid IV(A) from (3R)-3-hydroxytetradecanoyl-[acyl-carrier-protein] and UDP-N-acetyl-alpha-D-glucosamine: step 6/6. In terms of biological role, transfers the gamma-phosphate of ATP to the 4'-position of a tetraacyldisaccharide 1-phosphate intermediate (termed DS-1-P) to form tetraacyldisaccharide 1,4'-bis-phosphate (lipid IVA). The polypeptide is Tetraacyldisaccharide 4'-kinase (Methylorubrum populi (strain ATCC BAA-705 / NCIMB 13946 / BJ001) (Methylobacterium populi)).